A 320-amino-acid polypeptide reads, in one-letter code: MSVGFIGAGQLACALARGFTAAGVLSAHKIIASSPEMDLPTVSALRKMGVNLTRSNKDTVRHSDVLFLAVKPHIIPFILDEIGADVQERHIVVSCAAGVTISSVEKKLMAFQPAPKVIRCMTNTPVVVREGATVYATGTHALVEDGKLLEQLMSSVGFCTEVEEDLIDAITGLSGSGPAYAFMALDALADGGVKMGVPRRLAVRLGAQALLGAAKMLLDSEDHPGQLKDNVCSPGGATIHALHFLESGGFRSLLINAVEASCIRTRELQSMADQEKVSPAALKKTLLDRVKLESPTVSTLAPPSSGKLLTRNPAQGSKRE.

Position 2 is an N-acetylserine (Ser2). NADP(+) is bound by residues 6–11 (IGAGQL) and Ser34. Residues Ala8, Gln10, Leu11, Ser34, Glu36, Asn56, Val70, Lys71, and Ala97 each contribute to the NADPH site. NADP(+) is bound by residues Asn56, 69-72 (AVKP), and 95-97 (CAA). Glu164 is an L-proline binding site. Position 230 (Asn230) interacts with NADPH. The L-proline site is built by Ala237 and Thr238. Positions 293–320 (ESPTVSTLAPPSSGKLLTRNPAQGSKRE) are disordered. Position 304 is a phosphoserine (Ser304).

The protein belongs to the pyrroline-5-carboxylate reductase family. In terms of assembly, homodecamer; composed of 5 homodimers. Interacts with LTO1.

It is found in the cytoplasm. It localises to the mitochondrion. It catalyses the reaction L-proline + NADP(+) = (S)-1-pyrroline-5-carboxylate + NADPH + 2 H(+). The catalysed reaction is L-proline + NAD(+) = (S)-1-pyrroline-5-carboxylate + NADH + 2 H(+). It participates in amino-acid biosynthesis; L-proline biosynthesis; L-proline from L-glutamate 5-semialdehyde: step 1/1. Functionally, oxidoreductase that catalyzes the last step in proline biosynthesis, which corresponds to the reduction of pyrroline-5-carboxylate to L-proline using NAD(P)H. At physiologic concentrations, has higher specific activity in the presence of NADH. Involved in cellular response to oxidative stress. In some cell types, such as erythrocytes, its primary function may be the generation of NADP(+). This Rattus norvegicus (Rat) protein is Pyrroline-5-carboxylate reductase 2.